The primary structure comprises 395 residues: Putative nickel insertion protein (395 aa).

Belongs to the LarC family.

In Archaeoglobus fulgidus (strain ATCC 49558 / DSM 4304 / JCM 9628 / NBRC 100126 / VC-16), this protein is Putative nickel insertion protein.